The sequence spans 159 residues: 2-C-methyl-D-erythritol 2,4-cyclodiphosphate synthase (159 aa).

2 residues coordinate a divalent metal cation: Asp10 and His12. Residues 10–12 (DVH) and 37–38 (HS) contribute to the 4-CDP-2-C-methyl-D-erythritol 2-phosphate site. Position 45 (His45) interacts with a divalent metal cation. 4-CDP-2-C-methyl-D-erythritol 2-phosphate contacts are provided by residues 59–61 (DIG), 64–68 (FLDTD), 103–109 (AQAPKML), 135–138 (TTTE), Phe142, and Arg145.

Belongs to the IspF family. As to quaternary structure, homotrimer. A divalent metal cation serves as cofactor.

It catalyses the reaction 4-CDP-2-C-methyl-D-erythritol 2-phosphate = 2-C-methyl-D-erythritol 2,4-cyclic diphosphate + CMP. The protein operates within isoprenoid biosynthesis; isopentenyl diphosphate biosynthesis via DXP pathway; isopentenyl diphosphate from 1-deoxy-D-xylulose 5-phosphate: step 4/6. Functionally, involved in the biosynthesis of isopentenyl diphosphate (IPP) and dimethylallyl diphosphate (DMAPP), two major building blocks of isoprenoid compounds. Catalyzes the conversion of 4-diphosphocytidyl-2-C-methyl-D-erythritol 2-phosphate (CDP-ME2P) to 2-C-methyl-D-erythritol 2,4-cyclodiphosphate (ME-CPP) with a corresponding release of cytidine 5-monophosphate (CMP). This is 2-C-methyl-D-erythritol 2,4-cyclodiphosphate synthase from Francisella tularensis subsp. holarctica (strain FTNF002-00 / FTA).